The sequence spans 194 residues: Imidazoleglycerol-phosphate dehydratase (194 aa).

This sequence belongs to the imidazoleglycerol-phosphate dehydratase family.

The protein resides in the cytoplasm. It carries out the reaction D-erythro-1-(imidazol-4-yl)glycerol 3-phosphate = 3-(imidazol-4-yl)-2-oxopropyl phosphate + H2O. It participates in amino-acid biosynthesis; L-histidine biosynthesis; L-histidine from 5-phospho-alpha-D-ribose 1-diphosphate: step 6/9. The chain is Imidazoleglycerol-phosphate dehydratase from Thermus thermophilus (strain ATCC 27634 / DSM 579 / HB8).